A 272-amino-acid polypeptide reads, in one-letter code: Putative pyruvate, phosphate dikinase regulatory protein (272 aa).

153-160 (GVSRTSKT) contacts ADP.

This sequence belongs to the pyruvate, phosphate/water dikinase regulatory protein family. PDRP subfamily.

It carries out the reaction N(tele)-phospho-L-histidyl/L-threonyl-[pyruvate, phosphate dikinase] + ADP = N(tele)-phospho-L-histidyl/O-phospho-L-threonyl-[pyruvate, phosphate dikinase] + AMP + H(+). The catalysed reaction is N(tele)-phospho-L-histidyl/O-phospho-L-threonyl-[pyruvate, phosphate dikinase] + phosphate + H(+) = N(tele)-phospho-L-histidyl/L-threonyl-[pyruvate, phosphate dikinase] + diphosphate. In terms of biological role, bifunctional serine/threonine kinase and phosphorylase involved in the regulation of the pyruvate, phosphate dikinase (PPDK) by catalyzing its phosphorylation/dephosphorylation. In Chelativorans sp. (strain BNC1), this protein is Putative pyruvate, phosphate dikinase regulatory protein.